The chain runs to 430 residues: Enolase (430 aa).

A (2R)-2-phosphoglycerate-binding site is contributed by Q164. Residue E206 is the Proton donor of the active site. Residues D243, E286, and D313 each coordinate Mg(2+). (2R)-2-phosphoglycerate is bound by residues K338, R367, S368, and K389. K338 (proton acceptor) is an active-site residue.

It belongs to the enolase family. Component of the RNA degradosome, a multiprotein complex involved in RNA processing and mRNA degradation. It depends on Mg(2+) as a cofactor.

Its subcellular location is the cytoplasm. It localises to the secreted. It is found in the cell surface. It catalyses the reaction (2R)-2-phosphoglycerate = phosphoenolpyruvate + H2O. It functions in the pathway carbohydrate degradation; glycolysis; pyruvate from D-glyceraldehyde 3-phosphate: step 4/5. In terms of biological role, catalyzes the reversible conversion of 2-phosphoglycerate (2-PG) into phosphoenolpyruvate (PEP). It is essential for the degradation of carbohydrates via glycolysis. The sequence is that of Enolase from Dichelobacter nodosus (strain VCS1703A).